The sequence spans 252 residues: MLIFVGLGLYDLDDISLKGLQAIKEADAVFLETYTSVLTGTTIEQMREKYGKDLIILKRQDVEQKPEPILTAAKNGIAVFLTGGDPMVSTTHADLRIRAHEQGIPTKIIHGSSIVSAVSGLTGLQNYRFGKSCSIPYPAPKWFPKTPLDTILANLKQNLHTIVYLDIQENRYMSVHEGIELLEKLMEGSTDSIPLFVGIARAGSNSPVVAAGSSERLKLVDFGPPLHILVVPASLHEIEEEYLKNFAGYDPQ.

Residues Leu9, Asp85, Val88, 113 to 114 (SI), Leu165, Ala202, and His227 contribute to the S-adenosyl-L-methionine site.

The protein belongs to the diphthine synthase family. In terms of assembly, homodimer.

The catalysed reaction is 2-[(3S)-amino-3-carboxypropyl]-L-histidyl-[translation elongation factor 2] + 3 S-adenosyl-L-methionine = diphthine-[translation elongation factor 2] + 3 S-adenosyl-L-homocysteine + 3 H(+). Its pathway is protein modification; peptidyl-diphthamide biosynthesis. In terms of biological role, S-adenosyl-L-methionine-dependent methyltransferase that catalyzes the trimethylation of the amino group of the modified target histidine residue in translation elongation factor 2 (EF-2), to form an intermediate called diphthine. The three successive methylation reactions represent the second step of diphthamide biosynthesis. The polypeptide is Diphthine synthase (Methanospirillum hungatei JF-1 (strain ATCC 27890 / DSM 864 / NBRC 100397 / JF-1)).